The primary structure comprises 142 residues: Lysozyme X (142 aa).

An N-terminal signal peptide occupies residues 1 to 19 (MRALLGICVLALVTPAVLG). The C-type lysozyme domain maps to 20–142 (RTMDRCSLAR…YLPPIDDCFV (123 aa)). Disulfide bonds link cysteine 25–cysteine 140, cysteine 46–cysteine 130, cysteine 81–cysteine 97, and cysteine 93–cysteine 111. Catalysis depends on residues glutamate 51 and aspartate 69.

It belongs to the glycosyl hydrolase 22 family. Found in the midgut.

It carries out the reaction Hydrolysis of (1-&gt;4)-beta-linkages between N-acetylmuramic acid and N-acetyl-D-glucosamine residues in a peptidoglycan and between N-acetyl-D-glucosamine residues in chitodextrins.. In terms of biological role, unlikely to play an active role in the humoral immune defense. May have a function in the digestion of bacteria in the food. May be involved in the clearance of bacteria from the larval gut before metamorphosis. The polypeptide is Lysozyme X (LysX) (Drosophila melanogaster (Fruit fly)).